A 469-amino-acid chain; its full sequence is Histone chaperone rtt-106 (469 aa).

2 disordered regions span residues 54-73 (EEPATKRRRVEAQTSGPNGA) and 364-469 (MAEQ…EGEE). 2 stretches are compositionally biased toward basic and acidic residues: residues 364 to 379 (MAEQRKAKKQLAENAK) and 402 to 415 (ELERAQKEEEQRLQ). Composition is skewed to acidic residues over residues 416-433 (DEEDEEEEDYDPGSEGES) and 440-469 (SEEEEEEEDGEGEGDEDDDEDMGEGLEGEE).

Belongs to the RTT106 family. In terms of assembly, interacts with histones H3 and H4.

The protein localises to the nucleus. It is found in the chromosome. Its function is as follows. Histones H3 and H4 chaperone involved in the nucleosome formation and heterochromatin silencing. Required for the deposition of H3K56ac-carrying H3-H4 complex onto newly-replicated DNA. Plays a role in the transcriptional regulation of the cell-cycle dependent histone genes by creating a repressive structure at the core histone gene promoter. This is Histone chaperone rtt-106 (rtt-106) from Neurospora crassa (strain ATCC 24698 / 74-OR23-1A / CBS 708.71 / DSM 1257 / FGSC 987).